Consider the following 375-residue polypeptide: Queuine tRNA-ribosyltransferase (375 aa).

D89 (proton acceptor) is an active-site residue. Substrate-binding positions include 89–93 (DSGGF), D143, Q187, and G214. The segment at 245 to 251 (GVGKPED) is RNA binding. The active-site Nucleophile is the D264. The RNA binding; important for wobble base 34 recognition stretch occupies residues 269–273 (TRNAR). Zn(2+) contacts are provided by C302, C304, C307, and H333.

The protein belongs to the queuine tRNA-ribosyltransferase family. As to quaternary structure, homodimer. Within each dimer, one monomer is responsible for RNA recognition and catalysis, while the other monomer binds to the replacement base PreQ1. Zn(2+) is required as a cofactor.

The enzyme catalyses 7-aminomethyl-7-carbaguanine + guanosine(34) in tRNA = 7-aminomethyl-7-carbaguanosine(34) in tRNA + guanine. It functions in the pathway tRNA modification; tRNA-queuosine biosynthesis. Catalyzes the base-exchange of a guanine (G) residue with the queuine precursor 7-aminomethyl-7-deazaguanine (PreQ1) at position 34 (anticodon wobble position) in tRNAs with GU(N) anticodons (tRNA-Asp, -Asn, -His and -Tyr). Catalysis occurs through a double-displacement mechanism. The nucleophile active site attacks the C1' of nucleotide 34 to detach the guanine base from the RNA, forming a covalent enzyme-RNA intermediate. The proton acceptor active site deprotonates the incoming PreQ1, allowing a nucleophilic attack on the C1' of the ribose to form the product. After dissociation, two additional enzymatic reactions on the tRNA convert PreQ1 to queuine (Q), resulting in the hypermodified nucleoside queuosine (7-(((4,5-cis-dihydroxy-2-cyclopenten-1-yl)amino)methyl)-7-deazaguanosine). The chain is Queuine tRNA-ribosyltransferase from Citrobacter koseri (strain ATCC BAA-895 / CDC 4225-83 / SGSC4696).